The chain runs to 548 residues: Membrane protein insertase YidC (548 aa).

Residues 6 to 26 (NLLVIALLFVSFMIWQAWEQD) form a helical membrane-spanning segment. Residues 28-55 (NPQPQAQQTTQTTTTAAGSAADQGVPAS) are disordered. Residues 30–50 (QPQAQQTTQTTTTAAGSAADQ) are compositionally biased toward low complexity. The next 4 helical transmembrane spans lie at 350 to 370 (FVGN…GIMY), 420 to 440 (LGGC…YYML), 458 to 478 (LSAQ…MFFI), and 499 to 519 (PVIF…YYIV).

It belongs to the OXA1/ALB3/YidC family. Type 1 subfamily. Interacts with the Sec translocase complex via SecD. Specifically interacts with transmembrane segments of nascent integral membrane proteins during membrane integration.

Its subcellular location is the cell inner membrane. Its function is as follows. Required for the insertion and/or proper folding and/or complex formation of integral membrane proteins into the membrane. Involved in integration of membrane proteins that insert both dependently and independently of the Sec translocase complex, as well as at least some lipoproteins. Aids folding of multispanning membrane proteins. The sequence is that of Membrane protein insertase YidC from Escherichia fergusonii (strain ATCC 35469 / DSM 13698 / CCUG 18766 / IAM 14443 / JCM 21226 / LMG 7866 / NBRC 102419 / NCTC 12128 / CDC 0568-73).